The chain runs to 229 residues: Large ribosomal subunit protein uL1 (229 aa).

This sequence belongs to the universal ribosomal protein uL1 family. In terms of assembly, part of the 50S ribosomal subunit.

Its function is as follows. Binds directly to 23S rRNA. The L1 stalk is quite mobile in the ribosome, and is involved in E site tRNA release. In terms of biological role, protein L1 is also a translational repressor protein, it controls the translation of the L11 operon by binding to its mRNA. The polypeptide is Large ribosomal subunit protein uL1 (Clostridium perfringens (strain ATCC 13124 / DSM 756 / JCM 1290 / NCIMB 6125 / NCTC 8237 / Type A)).